The sequence spans 634 residues: Sodium-dependent neutral amino acid transporter B(0)AT1 (634 aa).

Residues Met-1 to Tyr-41 are Cytoplasmic-facing. Ser-17 bears the Phosphoserine mark. A helical membrane pass occupies residues Met-42–Cys-62. Residues Gln-63–Gly-67 lie on the Extracellular side of the membrane. Residues Gly-68–Leu-88 form a helical membrane-spanning segment. The Cytoplasmic segment spans residues Glu-89 to Leu-120. A helical transmembrane segment spans residues Thr-121 to Phe-141. Residues Asn-142 to Ser-192 are Extracellular-facing. Asn-158 and Asn-182 each carry an N-linked (GlcNAc...) asparagine glycan. Residues Ile-193 to Ile-213 traverse the membrane as a helical segment. The Cytoplasmic segment spans residues Arg-214 to Lys-221. The chain crosses the membrane as a helical span at residues Ala-222 to Leu-242. The Extracellular portion of the chain corresponds to Thr-243–Trp-268. Asn-258 is a glycosylation site (N-linked (GlcNAc...) asparagine). Residues Leu-269–Phe-289 traverse the membrane as a helical segment. The Cytoplasmic portion of the chain corresponds to Ser-290 to Val-304. Residues Ile-305 to Ile-325 traverse the membrane as a helical segment. Topologically, residues Gly-326–Ser-413 are extracellular. N-linked (GlcNAc...) asparagine glycosylation is found at Asn-354 and Asn-368. Residues Pro-414–Gly-434 traverse the membrane as a helical segment. At Asn-435 to Glu-456 the chain is on the cytoplasmic side. A helical membrane pass occupies residues Val-457–Ser-477. The Extracellular segment spans residues Gly-478–Gly-490. Residues Ser-491–Val-511 form a helical membrane-spanning segment. Over Asp-512–Gln-531 the chain is Cytoplasmic. The chain crosses the membrane as a helical span at residues Val-532–Val-552. The Extracellular portion of the chain corresponds to Glu-553–Trp-581. A helical membrane pass occupies residues Val-582–Ile-602. Topologically, residues Tyr-603–Tyr-634 are cytoplasmic. Phosphoserine is present on Ser-627.

It belongs to the sodium:neurotransmitter symporter (SNF) (TC 2.A.22) family. SLC6A19 subfamily. Interacts in a tissue-specific manner with ACE2 in small intestine and with CLTRN in the kidney. Interacts with CLTRN; this interaction is required for trafficking of SLC6A19 to the plasma membrane and for its catalytic activation in kidneys. Interacts with ACE2; this interaction is required for trafficking of SLC6A19 to the plasma membrane and for its catalytic activation in intestine. Interacts with ANPEP; the interaction positively regulates its amino acid transporter activity. Robust expression in kidney and small intestine, with minimal expression in pancreas. Also expressed in stomach, liver, duodenum, ileocecum, colon and prostate. Not detected in testis, whole brain, cerebellum, fetal liver, spleen, skeletal muscle, uterus, heart or lung.

The protein localises to the cell membrane. Its subcellular location is the apical cell membrane. It catalyses the reaction L-alanine(in) + Na(+)(in) = L-alanine(out) + Na(+)(out). It carries out the reaction L-cysteine(in) + Na(+)(in) = L-cysteine(out) + Na(+)(out). The catalysed reaction is L-glutamine(in) + Na(+)(in) = L-glutamine(out) + Na(+)(out). The enzyme catalyses glycine(in) + Na(+)(in) = glycine(out) + Na(+)(out). It catalyses the reaction L-isoleucine(in) + Na(+)(in) = L-isoleucine(out) + Na(+)(out). It carries out the reaction L-leucine(in) + Na(+)(in) = L-leucine(out) + Na(+)(out). The catalysed reaction is L-methionine(in) + Na(+)(in) = L-methionine(out) + Na(+)(out). The enzyme catalyses L-phenylalanine(in) + Na(+)(in) = L-phenylalanine(out) + Na(+)(out). It catalyses the reaction L-serine(in) + Na(+)(in) = L-serine(out) + Na(+)(out). It carries out the reaction L-tryptophan(in) + Na(+)(in) = L-tryptophan(out) + Na(+)(out). The catalysed reaction is L-tyrosine(in) + Na(+)(in) = L-tyrosine(out) + Na(+)(out). The enzyme catalyses L-valine(in) + Na(+)(in) = L-valine(out) + Na(+)(out). Transporter that mediates resorption of neutral amino acids across the apical membrane of renal and intestinal epithelial cells. This uptake is sodium-dependent and chloride-independent. Requires CLTRN in kidney or ACE2 in intestine for cell surface expression and amino acid transporter activity. This chain is Sodium-dependent neutral amino acid transporter B(0)AT1 (SLC6A19), found in Homo sapiens (Human).